Here is a 2485-residue protein sequence, read N- to C-terminus: Tyrosine-protein phosphatase non-receptor type 13 (2485 aa).

A KIND domain is found at 3-190 (VSLAEALEVR…SGTDQLSCNS (188 aa)). Positions 186 to 220 (LSCNSEQKPDRSQAIRDRLRGKGLPTGRSSTSDVL) are disordered. Positions 192–205 (QKPDRSQAIRDRLR) are enriched in basic and acidic residues. At Ser-240 the chain carries Phosphoserine. A disordered region spans residues 260-283 (SDNSGREDSENTFSPYQFKTSGPE). Polar residues predominate over residues 270-279 (NTFSPYQFKT). Ser-301 and Ser-302 each carry phosphoserine. Residues 433–467 (RSEASKRFESSSGLPGVDETLSQGQSQRPSRQYET) are disordered. Residues 452–465 (TLSQGQSQRPSRQY) are compositionally biased toward polar residues. Residues 469–504 (FEGNLINQEIMLKRQEEELMQLQAKMALRQSRLSLY) are a coiled coil. The FERM domain maps to 572-872 (RKVNIMLLNG…YQHKFQLQMR (301 aa)). Phosphoserine occurs at positions 890, 897, 908, 911, and 914. 2 disordered regions span residues 947–975 (QNSSKEKNDKASWEEKPREMSKSYHDLSQ) and 995–1049 (TVAE…IEDP). Residues 950-971 (SKEKNDKASWEEKPREMSKSYH) show a composition bias toward basic and acidic residues. Residues 1020–1032 (KLNNSKSVASLNR) show a composition bias toward polar residues. Ser-1029, Ser-1033, and Ser-1085 each carry phosphoserine. The segment covering 1033–1042 (SPERRKHESD) has biased composition (basic and acidic residues). Residues 1093-1178 (LVNLKKDAKY…EDVTLVISQP (86 aa)) form the PDZ 1 domain. 2 disordered regions span residues 1227–1258 (HISENSFGPSGGLREGSLSSQDSRTESASLSQ) and 1273–1362 (TWQE…SPPK). Composition is skewed to polar residues over residues 1243 to 1258 (SLSSQDSRTESASLSQ), 1273 to 1288 (TWQESQHGSPSPSVIS), and 1327 to 1359 (TYSSSQDHQTPKQESSSSVNTSNKMNFKTFSSS). 2 consecutive PDZ domains span residues 1368–1452 (EVEL…LEKG) and 1501–1588 (EVKL…LCRP). Residues 1608–1630 (AQVLPNSSKDSSQPSCVEQSTSS) show a composition bias toward polar residues. 2 disordered regions span residues 1608–1665 (AQVL…DLVT) and 1715–1751 (PNKPEFEDSNPSPLPPDMAPGQSYQPQSESASSSSMD). The segment covering 1736 to 1749 (QSYQPQSESASSSS) has biased composition (low complexity). 2 consecutive PDZ domains span residues 1788 to 1868 (LITL…IGRV) and 1882 to 1965 (PDIT…ATRN). The interval 1971–1996 (PSSKRSAVSAPKSTKGNGSYSVGSCS) is disordered. The span at 1973–1996 (SKRSAVSAPKSTKGNGSYSVGSCS) shows a compositional bias: polar residues. One can recognise a Tyrosine-protein phosphatase domain in the interval 2213–2467 (PSKELENLQE…IFCYQVILYV (255 aa)). Substrate is bound by residues Asp-2378, 2408 to 2414 (CSAGIGR), and Gln-2452. Cys-2408 acts as the Phosphocysteine intermediate in catalysis. A substrate region spans residues 2408-2414 (CSAGIGR).

The protein belongs to the protein-tyrosine phosphatase family. Non-receptor class subfamily. As to quaternary structure, interacts (via the first PDZ domain) with PLEKHA1 and PLEKHA2. Interacts (via the second PDZ domain) with TNFRSF6 (Fas receptor) (via C-terminus). Interacts (via the second PDZ domain) with TRIP6 (via the third LIM domain and C-terminus). Interacts (via the third PDZ domain) with NGFR (via C-terminal SVP motif) and PKN2 (via C-terminus). Interacts (via the second or fourth PDZ domains) with PDLIM4 (via C-terminus only or via combined C-terminus and LIM domain, but not LIM domain only). Found in a complex with PDLIM4 and TRIP6. Interacts with PDLIM4; this interaction results in dephosphorylation of SRC 'Tyr-419' by this protein leading to its inactivation. Interacts with BRD7. Interacts with RAPGEF6. Interacts with ARHGAP29. Interacts with PIK3R2; dephosphorylates PIK3R2. Interacts with FBXL2. Interacts (via the FERM domain) with ENTR1. Found in a complex with ENTR1, PTPN13 and GIT1. In terms of tissue distribution, expressed in keratinocytes (at protein level). Present in most tissues with the exception of the liver and skeletal muscle. Most abundant in lung, kidney and fetal brain.

It is found in the cytoplasm. The protein localises to the cytoskeleton. It localises to the nucleus. The protein resides in the cell projection. Its subcellular location is the lamellipodium. It carries out the reaction O-phospho-L-tyrosyl-[protein] + H2O = L-tyrosyl-[protein] + phosphate. Its function is as follows. Tyrosine phosphatase which negatively regulates FAS-induced apoptosis and NGFR-mediated pro-apoptotic signaling. May regulate phosphoinositide 3-kinase (PI3K) signaling through dephosphorylation of PIK3R2. This Homo sapiens (Human) protein is Tyrosine-protein phosphatase non-receptor type 13 (PTPN13).